Here is a 297-residue protein sequence, read N- to C-terminus: Phosphatidylinositol N-acetylglucosaminyltransferase subunit C (297 aa).

A run of 8 helical transmembrane segments spans residues 51–71 (VVFESSVVIQQLCSVCVFVVI), 80–100 (LAPHWLLGTGLASSLIGYVLF), 117–137 (WADLKSALVFITFTYGFSPVL), 153–173 (SVFMLLGHLIFFDYGANAAIV), 174–194 (SSTLSLNMAIFASVCLASRLP), 196–216 (SLHAFIMVTFAIQIFALWPML), 227–244 (SYVGVTLLFAFSAVGGLL), and 250–270 (GAVLFALLLMSISCLCPFYLI).

Belongs to the PIGC family. In terms of assembly, component of the glycosylphosphatidylinositol-N-acetylglucosaminyltransferase (GPI-GnT) complex composed at least by PIGA, PIGC, PIGH, PIGP, PIGQ, PIGY and DPM2. Interacts with PIGQ. Interacts with the heterodimer PIGA:PIGH.

The protein resides in the endoplasmic reticulum membrane. Its pathway is glycolipid biosynthesis; glycosylphosphatidylinositol-anchor biosynthesis. In terms of biological role, part of the glycosylphosphatidylinositol-N-acetylglucosaminyltransferase (GPI-GnT) complex that catalyzes the transfer of N-acetylglucosamine from UDP-N-acetylglucosamine to phosphatidylinositol and participates in the first step of GPI biosynthesis. The sequence is that of Phosphatidylinositol N-acetylglucosaminyltransferase subunit C from Homo sapiens (Human).